Consider the following 254-residue polypeptide: Ribosomal RNA large subunit methyltransferase E (254 aa).

Positions 1-18 (MTNSGKTGGKSGKGGTGG) are enriched in gly residues. The tract at residues 1–26 (MTNSGKTGGKSGKGGTGGARALKVRV) is disordered. Residues glycine 89, tryptophan 91, aspartate 119, aspartate 135, and aspartate 159 each coordinate S-adenosyl-L-methionine. Lysine 199 (proton acceptor) is an active-site residue.

It belongs to the class I-like SAM-binding methyltransferase superfamily. RNA methyltransferase RlmE family.

It is found in the cytoplasm. The enzyme catalyses uridine(2552) in 23S rRNA + S-adenosyl-L-methionine = 2'-O-methyluridine(2552) in 23S rRNA + S-adenosyl-L-homocysteine + H(+). Its function is as follows. Specifically methylates the uridine in position 2552 of 23S rRNA at the 2'-O position of the ribose in the fully assembled 50S ribosomal subunit. The protein is Ribosomal RNA large subunit methyltransferase E of Parvibaculum lavamentivorans (strain DS-1 / DSM 13023 / NCIMB 13966).